The chain runs to 213 residues: MGFTMDEEVIFETPRELISIKRIKDIPRSKDTHVFAACITSDGYPLIGARRTSFAFQAILSQQNSDSIFRVSTKLLRFMYYNELREIFRRLRKGSINNIDPHFEELILLGGKLDKKESIKDCLRRELKEESDEHITVKEFGNVILKLTTSDKLFNKVYIGYCMACFINQSLEDLSHTSIYNVEIRKIKSLNDCINDDKYEYLSYIYNILINSK.

2 residues coordinate N(7)-methyl-GTP: E16 and R50. One can recognise a Nudix hydrolase domain in the interval 30–209; the sequence is KDTHVFAACI…EYLSYIYNIL (180 aa). The Nudix box signature appears at 111 to 132; it reads GKLDKKESIKDCLRRELKEESD. Mg(2+)-binding residues include E126 and E130. D151 is a binding site for N(7)-methyl-GTP. E183 is a binding site for Mg(2+).

The protein belongs to the Nudix hydrolase family. In terms of assembly, interacts with the late transcription elongation factor VLTF-4/OPG110. Interacts with the late transcription factors VLTF-1. Mg(2+) is required as a cofactor. It depends on Mn(2+) as a cofactor.

It catalyses the reaction a 5'-end (N(7)-methyl 5'-triphosphoguanosine)-guanosine in mRNA + H2O = a 5'-end phospho-guanosine in mRNA + N(7)-methyl-GDP + 2 H(+). Functionally, acts with RNA polymerase to initiate transcription from late gene promoters. The polypeptide is mRNA-decapping protein OPG121 (OPG121) (Cynomys gunnisoni (Gunnison's prairie dog)).